The sequence spans 395 residues: Elongation factor Tu (395 aa).

In terms of domain architecture, tr-type G spans 10-204; sequence KPHCNIGTIG…TVDSYIPDPQ (195 aa). Residues 19 to 26 form a G1 region; sequence GHVDHGKT. 19–26 serves as a coordination point for GTP; it reads GHVDHGKT. Mg(2+) is bound at residue threonine 26. The segment at 61 to 65 is G2; that stretch reads GITIS. Residues 82-85 form a G3 region; it reads DCPG. GTP is bound by residues 82–86 and 137–140; these read DCPGH and NKCD. The G4 stretch occupies residues 137 to 140; that stretch reads NKCD. Positions 173 to 175 are G5; that stretch reads SAL.

It belongs to the TRAFAC class translation factor GTPase superfamily. Classic translation factor GTPase family. EF-Tu/EF-1A subfamily. Monomer.

The protein localises to the cytoplasm. It carries out the reaction GTP + H2O = GDP + phosphate + H(+). GTP hydrolase that promotes the GTP-dependent binding of aminoacyl-tRNA to the A-site of ribosomes during protein biosynthesis. The sequence is that of Elongation factor Tu from Agathobacter rectalis (strain ATCC 33656 / DSM 3377 / JCM 17463 / KCTC 5835 / VPI 0990) (Eubacterium rectale).